Here is a 205-residue protein sequence, read N- to C-terminus: Heme-binding protein 2 (205 aa).

The segment at 1 to 37 is disordered; the sequence is MAEEPEPDLGVAEGSEDQALEMPSWKAPEDIDPQPGS. Ala2 is modified (N-acetylalanine). Ser181 carries the post-translational modification Phosphoserine.

This sequence belongs to the HEBP family. In terms of assembly, monomer. Interacts with LRPPRC. May interact with BCL2L1; an interaction with BCL2L1 was observed using a peptide, but not with the full-length protein. The full-length protein would have to undergo a major conformation change for the interaction to occur. Interacts with PDCD6.

The protein resides in the cytoplasm. Its subcellular location is the mitochondrion. Can promote mitochondrial permeability transition and facilitate necrotic cell death under different types of stress conditions. May have low affinity for heme. The protein is Heme-binding protein 2 (Hebp2) of Mus musculus (Mouse).